A 609-amino-acid polypeptide reads, in one-letter code: Tyrosyl-DNA phosphodiesterase 1 (609 aa).

Positions methionine 1–isoleucine 12 are enriched in polar residues. The disordered stretch occupies residues methionine 1–isoleucine 155. Serine 61 is subject to Phosphoserine. Basic and acidic residues predominate over residues glutamine 105–serine 118. Residues serine 119 and serine 132 each carry the phosphoserine modification. Position 148 is a phosphothreonine (threonine 148). Serine 149 is modified (phosphoserine). Histidine 264 serves as the catalytic Nucleophile. Substrate is bound at residue lysine 266. Residues serine 401 to serine 404 form an interaction with DNA region. Histidine 494 functions as the Proton donor/acceptor in the catalytic mechanism. Lysine 496 provides a ligand contact to substrate.

This sequence belongs to the tyrosyl-DNA phosphodiesterase family. Monomer. As to expression, ubiquitous.

Its subcellular location is the nucleus. The protein resides in the cytoplasm. In terms of biological role, DNA repair enzyme that can remove a variety of covalent adducts from DNA through hydrolysis of a 3'-phosphodiester bond, giving rise to DNA with a free 3' phosphate. Catalyzes the hydrolysis of dead-end complexes between DNA and the topoisomerase I active site tyrosine residue. Hydrolyzes 3'-phosphoglycolates on protruding 3' ends on DNA double-strand breaks due to DNA damage by radiation and free radicals. Acts on blunt-ended double-strand DNA breaks and on single-stranded DNA. Has low 3'exonuclease activity and can remove a single nucleoside from the 3'end of DNA and RNA molecules with 3'hydroxyl groups. Has no exonuclease activity towards DNA or RNA with a 3'phosphate. The polypeptide is Tyrosyl-DNA phosphodiesterase 1 (Tdp1) (Mus musculus (Mouse)).